A 690-amino-acid chain; its full sequence is Protein SPT2 homolog (690 aa).

Residues 1 to 579 (MDFHNILVMA…PGHRPVFRPQ (579 aa)) are important for interaction with DNA. Residues 40–82 (ESAAVQAFLRRKEEEKRKKELEEKRKKERLLAKRIELKHDRKA) are a coiled coil. 2 disordered regions span residues 105 to 167 (PKKR…APAP) and 186 to 619 (EIKV…QEEI). Basic and acidic residues predominate over residues 186–228 (EIKVVKKIEERPRTAEELREREYLERKNKRVETQKKKSEKEVK). Positions 229–243 (SAGISSSSKKATSLK) are enriched in low complexity. Basic and acidic residues-rich tracts occupy residues 244 to 259 (ECAD…DKHA) and 271 to 285 (TDKK…EKHS). The segment covering 369–380 (HETNSSAKRPSS) has biased composition (polar residues). Gly residues predominate over residues 383 to 396 (GKGGSGHPAGGSSA). A compositionally biased stretch (low complexity) spans 397–442 (GPGRSSSNSGTGPGRPGSVSSPGPGRQGSSSAAGPGRPSSSSSLGP). 3 stretches are compositionally biased toward gly residues: residues 443–457 (GRLG…GRPG), 465–477 (GRPG…GPGR), and 489–521 (LGSG…GPGR). The segment covering 545–565 (VSETISSKNLVTRPSNGQING) has biased composition (polar residues). The interval 580-690 (GIGRPPVGYK…KRQSKKLRTR (111 aa)) is important for interaction with histones. Residues 593–617 (DDDDDDDEYDSEMDDFIEDEGEPQE) show a composition bias toward acidic residues. The stretch at 650-690 (REQQKEEARSLRLGVQEDLEELRREEEELKRKRQSKKLRTR) forms a coiled coil.

Belongs to the SPT2 family. As to quaternary structure, interacts with POLR1A. Interacts with histones. Interacts with a heterotetrameric complex formed by histone H3 and H4, especially when the histone tetramer is not bound to DNA.

It is found in the nucleus. The protein resides in the nucleolus. Functionally, histone chaperone that stabilizes pre-existing histone tetramers and regulates replication-independent histone exchange on chromatin. Required for normal chromatin refolding in the coding region of transcribed genes, and for the suppression of spurious transcription. Binds DNA and histones and promotes nucleosome assembly (in vitro). Modulates RNA polymerase 1-mediated transcription. Required for optimal growth in the presence of the DNA damaging agents actinomycin D or mitomycin C (in vitro). Facilitates formation of tetrameric histone complexes containing histone H3 and H4. Modulates RNA polymerase 1-mediated transcription. Binds DNA, with a preference for branched DNA species, such as Y-form DNA and Holliday junction DNA. The sequence is that of Protein SPT2 homolog (SPTY2D1) from Gallus gallus (Chicken).